Reading from the N-terminus, the 138-residue chain is ATP synthase epsilon chain (138 aa).

Basic and acidic residues predominate over residues 89 to 114; that stretch reads KDTAQQEWNEAQKRLDEASKSGDRQK. The interval 89–117 is disordered; it reads KDTAQQEWNEAQKRLDEASKSGDRQKQIQ.

This sequence belongs to the ATPase epsilon chain family. In terms of assembly, F-type ATPases have 2 components, CF(1) - the catalytic core - and CF(0) - the membrane proton channel. CF(1) has five subunits: alpha(3), beta(3), gamma(1), delta(1), epsilon(1). CF(0) has three main subunits: a, b and c.

Its subcellular location is the cellular thylakoid membrane. In terms of biological role, produces ATP from ADP in the presence of a proton gradient across the membrane. The chain is ATP synthase epsilon chain from Gloeothece citriformis (strain PCC 7424) (Cyanothece sp. (strain PCC 7424)).